A 1844-amino-acid polypeptide reads, in one-letter code: MAFQLALDALAPTTHRDPSLHPILESTVDSIRSSIQTYPWSIPKELLPLLNSYGIPTSGLGTSHHPHAAHKTIETFLLCTHWSFQATTPSSVMFMKPSKFNKLAQVNSNFRELKNYRLHPNDSTRYPFTSPDLPVFPTIFMHDALMYYHPSQIMDLFLQKPNLERLYASLVVPPEAHLSDQSFFPKLYTYTTTRHTLHYVPEGHEAGSYNQPSDAHSWLRINSIRLGNHHLSVTILESWGPVHSLLIQRGTPPPDPSLQAPSTPMASDLFRSYQEPRLDVVSFRIPDAIELPQATFLQQPLRDRLVPRAVYNALFTYTRAVRTLRTSDPAAFVRMHSSKPDHDWVTSNAWDNLQTFALLNVPLRPNVVYHVLQSPIASLALYLRQHWRRLTATAVPILSFLTLLQRFLPLPIPLAEVKSITAFRRELYRKKAPHHPLDVFHLQQHLRNHHSAISAVRPASPPHQRLPHALQKAALLLLRPISPLLTATPFFRSEQKSMLPNAELSWTLKRFALPWQASLVLLSLSESSVLLHKLFSPPTLQAQHDTYHRHLHPGSYSLQWERTPLSIPRTTAFLPFTPTTSTAPPDHSEASLPPAFASTSVPRPPPVASSLGAQPPTTTAAPPTPIEPTQRAHQNSDLTLESSTPIEPPPPPIQSSDIPPSAPVLFPEINSPHRFSPKLPTTPDFEPTRTSPPPSTSHQDSTDPADPLMGSHLLHHSLPAPPTHPLQSSQLLPAPLTNDPTAIGPVLPFEELHPRRYPENTATFLTRLRSLPSNHLPQPTLNCLLSAVSDQTKVSEDHLWESLQTILPDSQLRNEEINSLGLSTEHLTALAHLYNFQATIYSDRGPILFGPSDTIKRIDITHTTGPPSHFSPGKRLLGSQPSAKGHPSDSLIRAMKSFKVSGNYLPFSEAHNHPTSISHAKNLVSNMKNGFDGILSLLDVSTGQRTGPTPKDAIIQIDHYLDTNPGKTTPVVHFAGFAGCGKTYPIQQLLKTKLFKDFRVSCPTTELRTEWKTAMELHGSQSWRFNTWESSILKSSRILVIDEIYKMPRGYLDLSILADPALELVIILGDPLQGEYHSQSKDSSNHRLPSETLRLLPYIDMYCWWSYRIPQCIARLFQIHSFNAWQGIIGSVSTPQDQSPVLTNSHASSLTFNSLGYRSCTISSSQGLTFCDPAIIVLDNYTKWLSSANGLVALTRSRSGVQFMGPSSYVGGTNGSSAMFSDAFNNSLIIMDRYFPSLFPQLKLITSPLTTRSPKLNGATPSASPTHRSPNFHLPPHIPLSYDRDFVTVNPTLPDQGPETRLDTHFLPPSRLPLHFDLPPAITPPPISTSVDPPQAKASPVYPGEFFDSLAAFFLPAHDPSTREVLHKDQSSNQFPWFDRPFSLSCQPSSLISAKHAPNHDPTLLPASINKRLRFRPSEAPHQITADDVVLGLQLFHSLCRAYSRQPNITVPFNPELFAECISLNEYAQLSSKTQSTIVANASRSDPDWRHTTVKIFAKAQHKVNDGSIFGSWKACQTLALMHDYVILVLGPVKKYQRIFDNVDRPSHIYSHCGKTPNQLRDWCQEHLTHSTPKIANDYTAFDQSQHGESVVLEALKMKRLNIPSHLIQLHVHLKTNVSTQFGPLTCMRLTGEPGTYDDNTDYNLAVIYSQYDVGSCPIMVSGDDSLIDHPLPTRHDWPSVLKRLHLRFKLELTSHPLFCGYYVGPAGCIRNPLALFCKLMIAVDDDALDDRRLSYLTEFTTGHLLGESLWHLLPETHVQYQSACFDFFCRRCPKHEKMLLDDSTPTLSLLERITSSPRWLTKNAMYLLPAKLRLAITSLSQTQSFPESIEVSHAESELLHYVQ.

The Alphavirus-like MT domain maps to 58-219 (SGLGTSHHPH…NQPSDAHSWL (162 aa)). A disordered region spans residues 571 to 739 (TAFLPFTPTT…QLLPAPLTND (169 aa)). Residues 631–641 (RAHQNSDLTLE) are compositionally biased toward polar residues. The span at 725 to 736 (PLQSSQLLPAPL) shows a compositional bias: low complexity. Residues 728 to 879 (SSQLLPAPLT…FSPGKRLLGS (152 aa)) enclose the OTU domain. The 155-residue stretch at 730–884 (QLLPAPLTND…RLLGSQPSAK (155 aa)) folds into the Peptidase C21 domain. The active-site For protease activity is the cysteine 783. The interval 860–888 (ITHTTGPPSHFSPGKRLLGSQPSAKGHPS) is disordered. The GPP flap signature appears at 865–867 (GPP). The active-site For protease activity is histidine 869. In terms of domain architecture, (+)RNA virus helicase ATP-binding spans 946–1103 (TGPTPKDAII…RLLPYIDMYC (158 aa)). A ribonucleoside 5'-triphosphate is bound at residue 976–983 (GFAGCGKT). Positions 1104–1236 (WWSYRIPQCI…SLIIMDRYFP (133 aa)) constitute a (+)RNA virus helicase C-terminal domain. Residues 1572-1678 (TPKIANDYTA…DHPLPTRHDW (107 aa)) form the RdRp catalytic domain.

This sequence belongs to the Tymoviridae non-structural replication polyprotein family. Interacts with host ubiquitin. In terms of processing, specific enzymatic cleavages by the host yield mature proteins.

The protein localises to the host chloroplast envelope. The enzyme catalyses Thiol-dependent hydrolysis of ester, thioester, amide, peptide and isopeptide bonds formed by the C-terminal Gly of ubiquitin (a 76-residue protein attached to proteins as an intracellular targeting signal).. It carries out the reaction RNA(n) + a ribonucleoside 5'-triphosphate = RNA(n+1) + diphosphate. In terms of biological role, acts as a cysteine protease, methyltransferase and deubiquitinase. The cysteine protease activity cleaves the polyprotein giving rise to mature proteins. The protease has the ability to process substrates in trans. The methyltransferase domain is probably involved in viral RNA capping. The deubiquitylating activity counteracts the degradation of the viral polymerase mediated by the host ubiquitin-proteasome system. The polymerase is thus stabilized and infectivity is increased. Favors K63 poly-Ub linkage. Its function is as follows. RNA-directed RNA polymerase is responsible for the replication and transcription of the genome. This Turnip yellow mosaic virus (isolate Australia) protein is Non-structural replication polyprotein.